A 315-amino-acid chain; its full sequence is Calumenin-B (315 aa).

A signal peptide spans Met-1–Ser-19. Residues Met-22–His-39 are compositionally biased toward basic and acidic residues. The tract at residues Met-22 to Glu-42 is disordered. EF-hand domains lie at Glu-68–Arg-103, Trp-104–Asp-139, Gln-151–Asp-186, Met-188–Asp-223, Trp-229–Asp-264, and His-265–Ser-300. The Ca(2+) site is built by Asp-81, Asp-83, Asp-85, Glu-92, Asp-117, Asn-119, Asp-121, Glu-128, Asp-164, Asp-166, Asp-168, Arg-170, Glu-175, Asp-201, Asn-203, Asp-205, Glu-212, Asp-242, Asn-244, Asp-246, Arg-248, Glu-253, Asp-278, Asp-280, Asp-282, Arg-284, and Glu-289. Residues His-312–Phe-315 carry the Prevents secretion from ER motif.

The protein belongs to the CREC family. Interacts with ggcx.

It localises to the endoplasmic reticulum membrane. The protein resides in the golgi apparatus. The protein localises to the secreted. It is found in the melanosome. Its subcellular location is the sarcoplasmic reticulum lumen. Functionally, involved in regulation of vitamin K-dependent carboxylation of multiple N-terminal glutamate residues. Seems to inhibit gamma-carboxylase ggcx. Binds 7 calcium ions with a low affinity. This Danio rerio (Zebrafish) protein is Calumenin-B (calub).